The primary structure comprises 358 residues: Uroporphyrinogen decarboxylase (358 aa).

Residues 36–40 (RQAGR), Asp-85, Tyr-160, Ser-215, and His-338 contribute to the substrate site.

It belongs to the uroporphyrinogen decarboxylase family. As to quaternary structure, homodimer.

It is found in the cytoplasm. The catalysed reaction is uroporphyrinogen III + 4 H(+) = coproporphyrinogen III + 4 CO2. Its pathway is porphyrin-containing compound metabolism; protoporphyrin-IX biosynthesis; coproporphyrinogen-III from 5-aminolevulinate: step 4/4. In terms of biological role, catalyzes the decarboxylation of four acetate groups of uroporphyrinogen-III to yield coproporphyrinogen-III. The chain is Uroporphyrinogen decarboxylase from Corynebacterium glutamicum (strain R).